Here is a 904-residue protein sequence, read N- to C-terminus: Protein argonaute 4A (904 aa).

Disordered regions lie at residues 1–33 (MESN…KKLS) and 143–166 (KSSA…VRRP). Residues 11–21 (LPPPPPLPPNA) are compositionally biased toward pro residues. Positions 144–156 (SSANGGSPGNDSP) are enriched in low complexity. Residues 274 to 388 (PVVDFLLANQ…FPIELCSLVP (115 aa)) enclose the PAZ domain. In terms of domain architecture, Piwi spans 557 to 865 (FLLCVLAERK…AAAQVSQFIK (309 aa)). A disordered region spans residues 871–890 (ETSSSHGGHTSAGSAPVPEL). Residues 872–885 (TSSSHGGHTSAGSA) show a composition bias toward low complexity.

Belongs to the argonaute family. Ago subfamily.

In terms of biological role, probably involved in the RNA silencing pathway. May bind to short RNAs such as microRNAs (miRNAs) or short interfering RNAs (siRNAs), and represses the translation of mRNAs which are complementary to them. This Oryza sativa subsp. japonica (Rice) protein is Protein argonaute 4A (AGO4A).